The following is a 127-amino-acid chain: Ribosome-binding factor A (127 aa).

The protein belongs to the RbfA family. Monomer. Binds 30S ribosomal subunits, but not 50S ribosomal subunits or 70S ribosomes.

The protein localises to the cytoplasm. One of several proteins that assist in the late maturation steps of the functional core of the 30S ribosomal subunit. Associates with free 30S ribosomal subunits (but not with 30S subunits that are part of 70S ribosomes or polysomes). Required for efficient processing of 16S rRNA. May interact with the 5'-terminal helix region of 16S rRNA. The polypeptide is Ribosome-binding factor A (Rickettsia typhi (strain ATCC VR-144 / Wilmington)).